Reading from the N-terminus, the 359-residue chain is Alpha-2-HS-glycoprotein (359 aa).

The N-terminal stretch at 1–18 (MKSFVLLFCLAQLWGCHS) is a signal peptide. The Cystatin fetuin-A-type 1 domain occupies 27–133 (YKEPACDDPD…QFSVLFTKCD (107 aa)). Disulfide bonds link cysteine 32–cysteine 350, cysteine 89–cysteine 100, cysteine 114–cysteine 132, cysteine 146–cysteine 149, cysteine 208–cysteine 219, and cysteine 230–cysteine 248. Asparagine 99 is a glycosylation site (N-linked (GlcNAc...) asparagine). A phosphoserine mark is found at serine 134, serine 135, and serine 138. The region spanning 144-256 (KLCPDCPLLA…TCTLFQTQPV (113 aa)) is the Cystatin fetuin-A-type 2 domain. Asparagine 156 and asparagine 176 each carry an N-linked (GlcNAc...) asparagine glycan. Positions 257 to 285 (IPQPQPDGAEAEAPSAVPDAAGPTPSAAG) are disordered. Residue serine 271 is glycosylated (O-linked (GalNAc...) serine). The segment covering 276–285 (AAGPTPSAAG) has biased composition (low complexity). The O-linked (GalNAc...) threonine glycan is linked to threonine 280. O-linked (GalNAc...) serine glycans are attached at residues serine 282 and serine 296. Phosphothreonine is present on threonine 314. Phosphoserine occurs at positions 316, 320, 323, and 325. An O-linked (GalNAc...) threonine glycan is attached at threonine 334. A glycan (O-linked (GalNAc...) serine; partial) is linked at serine 341.

Belongs to the fetuin family. In terms of processing, phosphorylated by FAM20C in the extracellular medium. As to expression, liver and bone.

The protein resides in the secreted. Functionally, promotes endocytosis, possesses opsonic properties and influences the mineral phase of bone. Suggested to have lymphocyte stimulating properties, lipid binding capability and to bind thyroid hormone. This chain is Alpha-2-HS-glycoprotein (AHSG), found in Bos taurus (Bovine).